The chain runs to 297 residues: uncharacterized protein (297 aa).

The protein belongs to the metallo-dependent hydrolases superfamily.

This is an uncharacterized protein from Sinorhizobium fredii (strain NBRC 101917 / NGR234).